Reading from the N-terminus, the 825-residue chain is Fibrous sheath CABYR-binding protein (825 aa).

Disordered regions lie at residues 1 to 43 and 113 to 139; these read MVGK…SYSA and QDVEIPPNIPSVQLKMDRSQQTSRTGY. The segment covering 21–40 has biased composition (polar residues); the sequence is KSSSPKATHRIGNTSGSKGS. Phosphoserine is present on Ser-160. 3 disordered regions span residues 168-232, 244-718, and 732-751; these read SRPD…LLED, QEGS…DKHS, and GEASAEVSPPPSEQTPEDEA. The span at 200 to 220 shows a compositional bias: polar residues; the sequence is PATNSNEEIGQKNISRTSFTQ. Positions 277–290 are enriched in basic and acidic residues; that stretch reads ATAKAEPRPAEETH. 2 stretches are compositionally biased toward low complexity: residues 348–357 and 398–407; these read AEILPPSAEE and PLPAEGALEE. Over residues 610–676 the composition is skewed to pro residues; sequence VQPPPAEEAP…PAEVQPPPAE (67 aa).

In terms of assembly, interacts with CABYR. Interacts with ROPN1 and ROPN1L; the interaction increases upon spermatozoa capacitation conditions. Post-translationally, phosphorylated by PKA upon spermatozoa capacitation conditions.

The protein resides in the cell projection. It localises to the cilium. The protein localises to the flagellum. In terms of biological role, may be involved in the later stages of fibrous sheath biogenesis and spermatozoa capacitation. Inhibits ROPN1 and ROPN1L SUMOylation. Binds calcium. The polypeptide is Fibrous sheath CABYR-binding protein (FSCB) (Homo sapiens (Human)).